The following is a 129-amino-acid chain: Prefoldin subunit alpha (129 aa).

It belongs to the prefoldin alpha subunit family. In terms of assembly, heterohexamer of two alpha and four beta subunits.

It is found in the cytoplasm. In terms of biological role, molecular chaperone capable of stabilizing a range of proteins. Seems to fulfill an ATP-independent, HSP70-like function in archaeal de novo protein folding. This Thermofilum pendens (strain DSM 2475 / Hrk 5) protein is Prefoldin subunit alpha.